The chain runs to 149 residues: 5-hydroxytryptamine receptor 1E (149 aa).

The Extracellular segment spans residues 1–6 (HQPANY). Residues 7–31 (LICSLAVTDLLVAVLVMPLSIMYIV) traverse the membrane as a helical segment. Residues 32–39 (MDSWRLGY) are Cytoplasmic-facing. Residues 40–65 (FICEVWLSVDMTCCTCSILHLCVIAL) form a helical membrane-spanning segment. C42 and C120 are disulfide-bonded. D49 and C53 together coordinate serotonin. Residues 66-68 (DRY) carry the DRY motif; important for ligand-induced conformation changes motif. Residues 66-85 (DRYWAITNAIEYARKRTAKR) lie on the Extracellular side of the membrane. A helical transmembrane segment spans residues 86-104 (AGLMILTVWTISIFISMPP). Residues 105-149 (LFWRSHRQLSPPPSQCAIQHDHVIYTIYSTLGAFYIPLTLILILY) lie on the Cytoplasmic side of the membrane.

This sequence belongs to the G-protein coupled receptor 1 family.

Its subcellular location is the cell membrane. Its function is as follows. G-protein coupled receptor for 5-hydroxytryptamine (serotonin). Also functions as a receptor for various alkaloids and psychoactive substances. Ligand binding causes a conformation change that triggers signaling via guanine nucleotide-binding proteins (G proteins) and modulates the activity of downstream effectors, such as adenylate cyclase. HTR1E is coupled to G(i)/G(o) G alpha proteins and mediates inhibitory neurotransmission by inhibiting adenylate cyclase activity. This Sus scrofa (Pig) protein is 5-hydroxytryptamine receptor 1E (HTR1E).